Consider the following 473-residue polypeptide: GTPase Der (473 aa).

2 consecutive EngA-type G domains span residues 3–167 and 203–378; these read FTVA…GKDR and LRVA…RVWN. GTP is bound by residues 9–16, 56–60, 119–122, 209–216, 256–260, and 321–324; these read GRPNVGKS, DTAGL, NKSE, GRPNAGKS, DTAGM, and NKWD. A KH-like domain is found at 379–463; that stretch reads KRISTARLNR…PIRIHFRSAE (85 aa).

This sequence belongs to the TRAFAC class TrmE-Era-EngA-EngB-Septin-like GTPase superfamily. EngA (Der) GTPase family. As to quaternary structure, associates with the 50S ribosomal subunit.

GTPase that plays an essential role in the late steps of ribosome biogenesis. The sequence is that of GTPase Der from Rhizobium etli (strain CIAT 652).